A 284-amino-acid chain; its full sequence is 3-methyl-2-oxobutanoate hydroxymethyltransferase (284 aa).

Mg(2+) contacts are provided by D44 and D83. Residues D44–S45, D83, and K112 contribute to the 3-methyl-2-oxobutanoate site. Residue E114 coordinates Mg(2+). E181 serves as the catalytic Proton acceptor.

It belongs to the PanB family. In terms of assembly, homodecamer; pentamer of dimers. Requires Mg(2+) as cofactor.

It localises to the cytoplasm. It carries out the reaction 3-methyl-2-oxobutanoate + (6R)-5,10-methylene-5,6,7,8-tetrahydrofolate + H2O = 2-dehydropantoate + (6S)-5,6,7,8-tetrahydrofolate. It participates in cofactor biosynthesis; coenzyme A biosynthesis. With respect to regulation, neither activated nor inhibited by coenzyme A. Its function is as follows. Catalyzes the reversible reaction in which hydroxymethyl group from 5,10-methylenetetrahydrofolate is transferred onto alpha-ketoisovalerate to form ketopantoate. The chain is 3-methyl-2-oxobutanoate hydroxymethyltransferase from Thermococcus kodakarensis (strain ATCC BAA-918 / JCM 12380 / KOD1) (Pyrococcus kodakaraensis (strain KOD1)).